Here is a 721-residue protein sequence, read N- to C-terminus: MIYEGKAITVKALESGIVELNFDLKGESVNKFNRLTLNEFRQAVDAVKADASVKGVIVTSGKDSFIVGADITEFVDNFKLPEAELVAGNLEANRIFSDFEDLNVPTVVAINGIALGGGLEMCLAADYRVMASSARIGLPEVKLGLYPGFGGTVRLPRIIGADNAIEWIASGKENAAEDALKVGAVDAVVAPEKLQAAALDLIQRAISGEFDYKAKRQPKLDKLKLNAIEQMMAFETAKGFVAGQAGPNYPAPVEAIKTIQKAANFGRDKALEIEAAGFVKMAKTPAAQSLIGLFLNDQELKKKARGYDKIAKDVKQAAVLGAGIMGGGIAYQSAVKGTPILMKDIREEAIQLGLNEASKLLGGRLEKGRLTAAKMAEALNAIRPTLSYGDFGNVDLVVEAVVENPKVKQAVLAEVEANVGENTILASNTSTISISLLAQALKRPENFVGMHFFNPVHMMPLVEVIRGEKSSEEAVATTVAYAKKMGKNPIVVNDCPGFLVNRVLFPYFGGFARLVSAGVDFVRIDKVMEKFGWPMGPAYLMDVVGIDTGHHGRDVMAEGFPDRMKDDRRSAIDALYDAKRLGQKNGKGFYAYETDKKGKPKKVNDPAVLDVLKPIVYEQREVSDEDIVNWMMIPLCLETVRCLEDGIVETAAEADMGLIYGIGFPPFRGGALRYIDSIGVAEFVALADQYAELGALYQPTAKLREMAANGQSFFGQASSEE.

The tract at residues Met-1–Ala-190 is enoyl-CoA hydratase/isomerase. Position 297 (Asp-297) interacts with substrate. Residues Lys-312–Glu-721 are 3-hydroxyacyl-CoA dehydrogenase. NAD(+) contacts are provided by residues Met-325, Asp-344, Val-401–Glu-403, Lys-408, and Ser-430. The active-site For 3-hydroxyacyl-CoA dehydrogenase activity is the His-451. Asn-454 contacts NAD(+). Substrate-binding residues include Asn-501 and Tyr-660.

In the N-terminal section; belongs to the enoyl-CoA hydratase/isomerase family. The protein in the C-terminal section; belongs to the 3-hydroxyacyl-CoA dehydrogenase family. In terms of assembly, heterotetramer of two alpha chains (FadB) and two beta chains (FadA).

The enzyme catalyses a (3S)-3-hydroxyacyl-CoA + NAD(+) = a 3-oxoacyl-CoA + NADH + H(+). It carries out the reaction a (3S)-3-hydroxyacyl-CoA = a (2E)-enoyl-CoA + H2O. The catalysed reaction is a 4-saturated-(3S)-3-hydroxyacyl-CoA = a (3E)-enoyl-CoA + H2O. It catalyses the reaction (3S)-3-hydroxybutanoyl-CoA = (3R)-3-hydroxybutanoyl-CoA. The enzyme catalyses a (3Z)-enoyl-CoA = a 4-saturated (2E)-enoyl-CoA. It carries out the reaction a (3E)-enoyl-CoA = a 4-saturated (2E)-enoyl-CoA. It participates in lipid metabolism; fatty acid beta-oxidation. In terms of biological role, involved in the aerobic and anaerobic degradation of long-chain fatty acids via beta-oxidation cycle. Catalyzes the formation of 3-oxoacyl-CoA from enoyl-CoA via L-3-hydroxyacyl-CoA. It can also use D-3-hydroxyacyl-CoA and cis-3-enoyl-CoA as substrate. The chain is Fatty acid oxidation complex subunit alpha from Pseudomonas syringae pv. syringae (strain B728a).